We begin with the raw amino-acid sequence, 725 residues long: Catalase-peroxidase (725 aa).

The tryptophyl-tyrosyl-methioninium (Trp-Tyr) (with M-237) cross-link spans 88-211; it reads WHSAGTYRIQ…LAASEMGLIY (124 aa). Catalysis depends on H89, which acts as the Proton acceptor. Positions 211–237 form a cross-link, tryptophyl-tyrosyl-methioninium (Tyr-Met) (with W-88); it reads YVNPEGPGREPDPLKAAQQIRETFKRM. H252 is a binding site for heme b.

The protein belongs to the peroxidase family. Peroxidase/catalase subfamily. Homodimer or homotetramer. It depends on heme b as a cofactor. In terms of processing, formation of the three residue Trp-Tyr-Met cross-link is important for the catalase, but not the peroxidase activity of the enzyme.

The catalysed reaction is H2O2 + AH2 = A + 2 H2O. It carries out the reaction 2 H2O2 = O2 + 2 H2O. Functionally, bifunctional enzyme with both catalase and broad-spectrum peroxidase activity. The polypeptide is Catalase-peroxidase (Symbiobacterium thermophilum (strain DSM 24528 / JCM 14929 / IAM 14863 / T)).